The primary structure comprises 144 residues: Nucleoside diphosphate kinase (144 aa).

Residues Lys11, Phe59, Arg87, Thr93, Arg104, and Asn114 each coordinate ATP. Catalysis depends on His117, which acts as the Pros-phosphohistidine intermediate.

It belongs to the NDK family. In terms of assembly, homotetramer. Mg(2+) serves as cofactor.

The protein localises to the cytoplasm. The enzyme catalyses a 2'-deoxyribonucleoside 5'-diphosphate + ATP = a 2'-deoxyribonucleoside 5'-triphosphate + ADP. It carries out the reaction a ribonucleoside 5'-diphosphate + ATP = a ribonucleoside 5'-triphosphate + ADP. In terms of biological role, major role in the synthesis of nucleoside triphosphates other than ATP. The ATP gamma phosphate is transferred to the NDP beta phosphate via a ping-pong mechanism, using a phosphorylated active-site intermediate. The polypeptide is Nucleoside diphosphate kinase (Aliivibrio fischeri (strain MJ11) (Vibrio fischeri)).